Consider the following 181-residue polypeptide: MDHQTAEALRAFTQRYCAVWQQQRHSLPRSEELYGVPSPCVVDTQGEAVFWQPQPFSLAQNISAVERALDIVVQQPLHSYYTTQFAGDMSGRFAGETLTLLQTWSEEDFQRVQENLIGHLVVQKRLKLSPTLFIATLESELDVISVCNLSGEVVKETLGTAKRITLSPSLAGFLNHLEPVL.

The protein belongs to the Syd family.

The protein localises to the cell inner membrane. In terms of biological role, interacts with the SecY protein in vivo. May bind preferentially to an uncomplexed state of SecY, thus functioning either as a chelating agent for excess SecY in the cell or as a regulatory factor that negatively controls the translocase function. The protein is Protein Syd of Klebsiella pneumoniae subsp. pneumoniae (strain ATCC 700721 / MGH 78578).